The chain runs to 227 residues: Ureidoacrylate amidohydrolase RutB (227 aa).

Asp-22 serves as the catalytic Proton acceptor. Lys-131 is an active-site residue. Cys-164 serves as the catalytic Nucleophile.

This sequence belongs to the isochorismatase family. RutB subfamily.

The catalysed reaction is (Z)-3-ureidoacrylate + H2O + H(+) = (Z)-3-aminoacrylate + NH4(+) + CO2. It catalyses the reaction (Z)-3-ureidoacrylate + H2O = (Z)-3-aminoacrylate + carbamate + H(+). The enzyme catalyses (Z)-2-methylureidoacrylate + H2O + H(+) = (Z)-2-methylaminoacrylate + NH4(+) + CO2. Its function is as follows. Hydrolyzes ureidoacrylate to form aminoacrylate and carbamate. The carbamate hydrolyzes spontaneously, thereby releasing one of the nitrogen atoms of the pyrimidine ring as ammonia and one of its carbon atoms as CO2. In Azorhizobium caulinodans (strain ATCC 43989 / DSM 5975 / JCM 20966 / LMG 6465 / NBRC 14845 / NCIMB 13405 / ORS 571), this protein is Ureidoacrylate amidohydrolase RutB.